Reading from the N-terminus, the 414-residue chain is MHYCVLSTFLLLHLVPVALSLSTCSTLDMDQFMRKRIEAIRGQILSKLKLTSPPEDYPEPDEVPPEVISIYNSTRDLLQEKASRRAAACERERSDEEYYAKEVYKIDMPSHLPSENAIPPTFYRPYFRIVRFDVSTMEKNASNLVKAEFRVFRLQNPKARVAEQRIELYQILKSKDLTSPTQRYIDSKVVKTRAEGEWLSFDVTDAVQEWLHHKDRNLGFKISLHCPCCTFVPSNNYIIPNKSEELEARFAGIDGTSTYASGDQKTIKSTRKKTSGKTPHLLLMLLPSYRLESQQSSRRKKRALDAAYCFRNVQDNCCLRPLYIDFKRDLGWKWIHEPKGYNANFCAGACPYLWSSDTQHTKVLSLYNTINPEASASPCCVSQDLEPLTILYYIGNTPKIEQLSNMIVKSCKCS.

A signal peptide spans 1-20; sequence MHYCVLSTFLLLHLVPVALS. Asparagine 72, asparagine 140, and asparagine 241 each carry an N-linked (GlcNAc...) asparagine glycan. 4 disulfide bridges follow: cysteine 309–cysteine 318, cysteine 317–cysteine 380, cysteine 346–cysteine 411, and cysteine 350–cysteine 413.

The protein belongs to the TGF-beta family. Interacts with the serine proteases, HTRA1 and HTRA3. Interacts with ASPN. Interacts with MFAP5. As to quaternary structure, interacts with Transforming growth factor beta-2 (TGF-beta-2) chain; interaction is non-covalent and maintains (TGF-beta-2) in a latent state. Interacts with LRRC32/GARP; leading to regulate activation of TGF-beta-2. Interacts with NREP; the interaction results in a decrease in TGFB2 autoinduction. In terms of assembly, transforming growth factor beta-2: Homodimer; disulfide-linked. Transforming growth factor beta-2: Interacts with TGF-beta receptors (TGFBR1 and TGFBR2), leading to signal transduction. The precursor proprotein is cleaved in the Golgi apparatus to form Transforming growth factor beta-2 (TGF-beta-2) and Latency-associated peptide (LAP) chains, which remain non-covalently linked, rendering TGF-beta-2 inactive.

Its subcellular location is the secreted. The protein resides in the extracellular space. It is found in the extracellular matrix. Functionally, precursor of the Latency-associated peptide (LAP) and Transforming growth factor beta-2 (TGF-beta-2) chains, which constitute the regulatory and active subunit of TGF-beta-2, respectively. Required to maintain the Transforming growth factor beta-2 (TGF-beta-2) chain in a latent state during storage in extracellular matrix. Associates non-covalently with TGF-beta-2 and regulates its activation via interaction with 'milieu molecules', such as LTBP1 and LRRC32/GARP, that control activation of TGF-beta-2. Its function is as follows. Multifunctional protein that regulates various processes such as angiogenesis and heart development. Activation into mature form follows different steps: following cleavage of the proprotein in the Golgi apparatus, Latency-associated peptide (LAP) and Transforming growth factor beta-2 (TGF-beta-2) chains remain non-covalently linked rendering TGF-beta-2 inactive during storage in extracellular matrix. At the same time, LAP chain interacts with 'milieu molecules', such as LTBP1 and LRRC32/GARP, that control activation of TGF-beta-2 and maintain it in a latent state during storage in extracellular milieus. Once activated following release of LAP, TGF-beta-2 acts by binding to TGF-beta receptors (TGFBR1 and TGFBR2), which transduce signal. This is Transforming growth factor beta-2 proprotein (Tgfb2) from Mus musculus (Mouse).